Reading from the N-terminus, the 402-residue chain is MEKWHNPSSPKRLRGDTPNSWSELPLDLLTAVFERLSYANFQRAKSVCSSWHSGSRQSVPIQIPWLILFPEYDNNNSCTLFNPEEKGQVYKMKDLGVEFSKSVCTATYGSWLLMRDPLYNLYILNLFTHERVNLPPFESQLGMVKIERTIYDWFHSTLHYNGKEYHKRIRILSTVFWIDEKTKDYVVIWGLGSSCVVYSKKGDKCWNQIPETSNCHHMVYKDHKLYFSTSTYKYEFRIFDFSREIPQQIFQGYVIMQGLTLNRHRGQPGYPFATIDTKLVVTVTGDVLKVDRIVEKETRICRFFYVYKVYSSGSYKKYEKVESLGDEAILLDLGITMLANDTVGLLGNSIYFSGTHTKSKVINDTFIFSLETQKMDPVHKFDCSSAQLSSARWFLPSSHKLD.

One can recognise an F-box domain in the interval 18–64 (PNSWSELPLDLLTAVFERLSYANFQRAKSVCSSWHSGSRQSVPIQIP).

This is Putative F-box protein At4g22180 from Arabidopsis thaliana (Mouse-ear cress).